The sequence spans 185 residues: Sarcoplasmic calcium-binding proteins II, V, VI, and VII (185 aa).

4 consecutive EF-hand domains span residues 5–41 (FQKQ…YKEV), 57–92 (SLED…TIAT), 102–137 (WCQN…FQLQ), and 138–173 (CADV…TSPA). Residues D19, N21, D23, S25, D30, D70, N72, D74, E81, D115, S117, D119, and E126 each coordinate Ca(2+).

Its function is as follows. Like parvalbumins, SCPs seem to be more abundant in fast contracting muscles, but no functional relationship can be established from this distribution. This is Sarcoplasmic calcium-binding proteins II, V, VI, and VII from Branchiostoma lanceolatum (Common lancelet).